A 519-amino-acid polypeptide reads, in one-letter code: Probable U3 small nucleolar RNA-associated protein 18 (519 aa).

WD repeat units follow at residues 26-66 (DKEN…MFDT), 71-111 (GAKD…RLMI), 216-254 (SHSG…NPLV), 259-298 (LRSS…VQKV), 306-345 (NFQP…FATS), 347-386 (KIEG…VVRR), 390-429 (QDGV…ADAA), 438-479 (NITF…VFRN), and 485-519 (TPLG…AHYD).

Belongs to the WD repeat UTP18 family. In terms of assembly, component of the ribosomal small subunit (SSU) processome.

The protein localises to the nucleus. It localises to the nucleolus. Involved in nucleolar processing of pre-18S ribosomal RNA. The chain is Probable U3 small nucleolar RNA-associated protein 18 from Schizosaccharomyces pombe (strain 972 / ATCC 24843) (Fission yeast).